Here is a 225-residue protein sequence, read N- to C-terminus: Leucyl/phenylalanyl-tRNA--protein transferase (225 aa).

The protein belongs to the L/F-transferase family.

The protein resides in the cytoplasm. The enzyme catalyses N-terminal L-lysyl-[protein] + L-leucyl-tRNA(Leu) = N-terminal L-leucyl-L-lysyl-[protein] + tRNA(Leu) + H(+). The catalysed reaction is N-terminal L-arginyl-[protein] + L-leucyl-tRNA(Leu) = N-terminal L-leucyl-L-arginyl-[protein] + tRNA(Leu) + H(+). It catalyses the reaction L-phenylalanyl-tRNA(Phe) + an N-terminal L-alpha-aminoacyl-[protein] = an N-terminal L-phenylalanyl-L-alpha-aminoacyl-[protein] + tRNA(Phe). In terms of biological role, functions in the N-end rule pathway of protein degradation where it conjugates Leu, Phe and, less efficiently, Met from aminoacyl-tRNAs to the N-termini of proteins containing an N-terminal arginine or lysine. This is Leucyl/phenylalanyl-tRNA--protein transferase from Rhodopseudomonas palustris (strain TIE-1).